We begin with the raw amino-acid sequence, 238 residues long: Protein MIS12 homolog (238 aa).

Residues 117-149 adopt a coiled-coil conformation; it reads ELDAELDSLRDKLNVVGKRSVELDSELQALERS.

The protein belongs to the mis12 family.

The protein localises to the chromosome. It is found in the centromere. Its subcellular location is the kinetochore. Constitutive component of kinetochores that is essential for proper cell division during mitotic cell cycle. May play a role in the modulation of centromere during meiosis. The protein is Protein MIS12 homolog of Arabidopsis thaliana (Mouse-ear cress).